Consider the following 105-residue polypeptide: Small ribosomal subunit protein uS10 (105 aa).

Belongs to the universal ribosomal protein uS10 family. As to quaternary structure, part of the 30S ribosomal subunit.

Functionally, involved in the binding of tRNA to the ribosomes. This is Small ribosomal subunit protein uS10 from Chlamydia pneumoniae (Chlamydophila pneumoniae).